The chain runs to 374 residues: DNA-directed RNA polymerase subunit alpha (374 aa).

The segment at 1–270 is alpha N-terminal domain (alpha-NTD); the sequence is MIFDEDSSSV…DQFQQFINFD (270 aa). Residues 282-374 form an alpha C-terminal domain (alpha-CTD) region; that stretch reads KDVLPYDSNL…ESLSKQYSEE (93 aa).

Belongs to the RNA polymerase alpha chain family. Homodimer. The RNAP catalytic core consists of 2 alpha, 1 beta, 1 beta' and 1 omega subunit. When a sigma factor is associated with the core the holoenzyme is formed, which can initiate transcription.

It carries out the reaction RNA(n) + a ribonucleoside 5'-triphosphate = RNA(n+1) + diphosphate. DNA-dependent RNA polymerase catalyzes the transcription of DNA into RNA using the four ribonucleoside triphosphates as substrates. The sequence is that of DNA-directed RNA polymerase subunit alpha from Ehrlichia ruminantium (strain Gardel).